Consider the following 198-residue polypeptide: Glycerol-3-phosphate acyltransferase 2 (198 aa).

4 helical membrane-spanning segments follow: residues Thr-4–Gly-24, Leu-71–Gly-91, Leu-113–Phe-133, and Val-147–Leu-167.

Belongs to the PlsY family. As to quaternary structure, probably interacts with PlsX.

The protein resides in the cell membrane. The catalysed reaction is an acyl phosphate + sn-glycerol 3-phosphate = a 1-acyl-sn-glycero-3-phosphate + phosphate. It functions in the pathway lipid metabolism; phospholipid metabolism. Catalyzes the transfer of an acyl group from acyl-phosphate (acyl-PO(4)) to glycerol-3-phosphate (G3P) to form lysophosphatidic acid (LPA). This enzyme utilizes acyl-phosphate as fatty acyl donor, but not acyl-CoA or acyl-ACP. The sequence is that of Glycerol-3-phosphate acyltransferase 2 from Bacillus cereus (strain ZK / E33L).